A 288-amino-acid polypeptide reads, in one-letter code: uncharacterized protein (288 aa).

The protein to M.bovis Mb1522c, M.leprae ML1804 and M.avium MAV321.

This is an uncharacterized protein from Mycobacterium tuberculosis (strain CDC 1551 / Oshkosh).